We begin with the raw amino-acid sequence, 90 residues long: uncharacterized protein (90 aa).

This is an uncharacterized protein from Thermoproteus tenax (TTV1).